We begin with the raw amino-acid sequence, 107 residues long: uncharacterized protein (107 aa).

Over 1–4 the chain is Cytoplasmic; sequence MSLV. Residues 5 to 25 traverse the membrane as a helical segment; sequence IDIADTIVSLTALIGLIITLI. The Extracellular portion of the chain corresponds to 26-107; sequence KFHSQNKEDA…ELCRSSDRSK (82 aa).

Its subcellular location is the host membrane. This is an uncharacterized protein from Acidianus sp. F28 (AFV-2).